Reading from the N-terminus, the 1556-residue chain is Bromodomain adjacent to zinc finger domain protein 1A (1556 aa).

The interval 1-128 (MPLLHRKPFV…EETVEVIRNN (128 aa)) is required for interaction with the CHRAC1-POLE3 heterodimer. Required for interaction with the CHRAC1-POLE3 heterodimer. Positions 1–133 (MPLLHRKPFV…VIRNNGARLQ (133 aa)) are required for interaction with NCOR1. The WAC domain occupies 22–128 (EEVFYCKVTN…EETVEVIRNN (107 aa)). The residue at position 270 (serine 270) is a Phosphoserine. The stretch at 306–397 (KERDKLLKQE…YVEYLKQWSK (92 aa)) forms a coiled coil. In terms of domain architecture, DDT spans 422–487 (PEIFGDALMV…LTAIFQAIAE (66 aa)). The stretch at 634 to 709 (IEDYVDILRQ…DISIGEEERE (76 aa)) forms a coiled coil. Positions 662 to 695 (EAAARIRKRKEEKLKEQEQKMKEKQEKLKEDEQR) are enriched in basic and acidic residues. 3 disordered regions span residues 662 to 754 (EAAA…NGFK), 841 to 877 (PSSFQNNVQSQDPQVSTKTGEPLMSESTSNIDQGPRD), and 941 to 966 (FHFSDKPQPDSKPTYSRGRSSNAYDP). The required for interaction with SMARCA5 and formation of the CHRAC ISWI chromatin remodeling complex stretch occupies residues 667-933 (IRKRKEEKLK…QEKSRICAQL (267 aa)). The residue at position 702 (serine 702) is a Phosphoserine. The segment covering 703-713 (IGEEEREDFDT) has biased composition (acidic residues). Positions 715-726 (IESKDTEQKELD) are enriched in basic and acidic residues. Acidic residues predominate over residues 727-736 (QDMVTEDEDD). Threonine 731 carries the phosphothreonine modification. 2 stretches are compositionally biased toward polar residues: residues 842-872 (SSFQNNVQSQDPQVSTKTGEPLMSESTSNID) and 951-965 (SKPTYSRGRSSNAYD). Lysine 952 is covalently cross-linked (Glycyl lysine isopeptide (Lys-Gly) (interchain with G-Cter in SUMO2)). Phosphoserine occurs at positions 960 and 961. The segment at 1148–1198 (NARCKICRKKGDAENMVLCDGCDRGHHTYCVRPKLKTVPEGDWFCPECRPK) adopts a PHD-type zinc-finger fold. Disordered stretches follow at residues 1202–1376 (RRLS…NFPN) and 1399–1431 (LQESESKRRCRKRQSPEPSPVTLGRRSSGRQGG). Residues 1213–1258 (ESDEDVEDSMGGEDDEVDGDEEEGQSEEEEYEVEQDEDDSQEEEEV) show a composition bias toward acidic residues. Over residues 1262–1276 (KRGRPQVRLPVKTRG) the composition is skewed to basic residues. Over residues 1277–1312 (KLSSSFSSRGQQQEPGRYPSRSQQSTPKTTVSSKTG) the composition is skewed to polar residues. Phosphoserine is present on residues serine 1281, serine 1320, serine 1339, serine 1353, serine 1363, serine 1371, serine 1402, serine 1413, and serine 1417. The segment covering 1363–1374 (SANNTPENSPNF) has biased composition (polar residues). One can recognise a Bromo domain in the interval 1430-1533 (GGVHELSAFE…AFFHIQAQKL (104 aa)). Position 1547 is a phosphothreonine (threonine 1547).

It belongs to the WAL family. Component of the ACF-1 ISWI chromatin remodeling complex at least composed of SMARCA1 and BAZ1A, which regulates the spacing of histone octamers on the DNA template to facilitate access to DNA. Within the ACF-1 ISWI chromatin remodeling complex interacts with SMARCA1; the interaction is direct. Component of the ACF-5 ISWI chromatin remodeling complex (also called the ACF complex) at least composed of BAZ1A and SMARCA5/SNF2H, which regulates the spacing of histone octamers on the DNA template to facilitate access to DNA. Within the ACF-5 ISWI chromatin remodeling complex interacts with SMARCA5/SNF2H; the interaction is direct. Component of the CHRAC ISWI chromatin remodeling complex at least composed of SMARCA5/SNF2H, BAZ1A/ACF1, CHRAC1 and POLE3; the complex preferentially binds DNA through the CHRAC1-POLE3 heterodimer and possesses ATP-dependent nucleosome-remodeling activity. Within the complex interacts (via N-terminus) with POLE3-CHRAC1 heterodimer; the interaction is direct and is required for the complex to preferentially bind to DNA. Within the complex interacts with SMARCA5/SNF2H; the interaction is direct and promotes the interaction with the POLE3-CHRAC1 heterodimer. Interacts with NCOR1 (via its RD1 domain); the interaction corepresses a number of NCOR1-regulated genes. In terms of tissue distribution, highly expressed in testis and at low or undetectable levels in other tissues analyzed.

The protein resides in the nucleus. Its function is as follows. Regulatory subunit of the ATP-dependent ACF-1 and ACF-5 ISWI chromatin remodeling complexes, which form ordered nucleosome arrays on chromatin and slide edge- and center-positioned histone octamers away from their original location on the DNA template to facilitate access to DNA during DNA-templated processes such as DNA replication, transcription, and repair. Both complexes regulate the spacing of nucleosomes along the chromatin and have the ability to slide mononucleosomes to the center of a DNA template in an ATP-dependent manner. The ACF-1 ISWI chromatin remodeling complex has a lower ATP hydrolysis rate than the ACF-5 ISWI chromatin remodeling complex. Has a role in sensing the length of DNA which flank nucleosomes, which modulates the nucleosome spacing activity of the ACF-5 ISWI chromatin remodeling complex. Involved in DNA replication and together with SMARCA5/SNF2H is required for replication of pericentric heterochromatin in S-phase. May have a role in nuclear receptor-mediated transcription repression. The polypeptide is Bromodomain adjacent to zinc finger domain protein 1A (BAZ1A) (Homo sapiens (Human)).